A 446-amino-acid chain; its full sequence is Phosphoglucosamine mutase (446 aa).

The active-site Phosphoserine intermediate is Ser-100. Residues Ser-100, Asp-241, Asp-243, and Asp-245 each coordinate Mg(2+). Ser-100 bears the Phosphoserine mark.

This sequence belongs to the phosphohexose mutase family. Requires Mg(2+) as cofactor. In terms of processing, activated by phosphorylation.

The enzyme catalyses alpha-D-glucosamine 1-phosphate = D-glucosamine 6-phosphate. Its function is as follows. Catalyzes the conversion of glucosamine-6-phosphate to glucosamine-1-phosphate. The polypeptide is Phosphoglucosamine mutase (Methylobacterium sp. (strain 4-46)).